The sequence spans 178 residues: MARPDTVIPDKPESPYPIVQDSVVVSGFGRGSSELGIPTANIPINDDLNQLETGIYYGWCQLKPCTLPDECKTRTNGREVIYNHGKNLRNDDLKVLPMVMSIGWNPFYHLKEKAAEVHIMHKFDDFFYGAQIKFNVLGYIRPELDYTTKEALIEDINLDIKIALEALDRDAYQTYKDL.

Mg(2+) is bound by residues Thr-39 and Asn-41. Glu-116 (nucleophile) is an active-site residue.

Belongs to the flavokinase family. It depends on Zn(2+) as a cofactor. Requires Mg(2+) as cofactor.

It catalyses the reaction riboflavin + ATP = FMN + ADP + H(+). It functions in the pathway cofactor biosynthesis; FMN biosynthesis; FMN from riboflavin (ATP route): step 1/1. Its function is as follows. Catalyzes the phosphorylation of riboflavin (vitamin B2) to form flavin mononucleotide (FMN) coenzyme. The chain is Riboflavin kinase (FMN1) from Scheffersomyces stipitis (strain ATCC 58785 / CBS 6054 / NBRC 10063 / NRRL Y-11545) (Yeast).